The sequence spans 41 residues: DCEQHTDCSAASGPVYCCQDSDCCGGVDYICTNYGQCVRHF.

In terms of processing, contains 4 disulfide bonds. As to expression, expressed by the venom duct.

It is found in the secreted. In terms of biological role, does not elicit any observable symptomatology in C.elegans. The sequence is that of Augerpeptide-s11a from Terebra subulata (Chocolate spotted auger).